The following is a 123-amino-acid chain: Small ribosomal subunit protein uS12 (123 aa).

The tract at residues 1-24 (MPTINQLVRKGRTPQKVKSKVPAM) is disordered. Residues 9–19 (RKGRTPQKVKS) show a composition bias toward basic residues. D89 is modified (3-methylthioaspartic acid).

Belongs to the universal ribosomal protein uS12 family. As to quaternary structure, part of the 30S ribosomal subunit. Contacts proteins S8 and S17. May interact with IF1 in the 30S initiation complex.

Functionally, with S4 and S5 plays an important role in translational accuracy. Interacts with and stabilizes bases of the 16S rRNA that are involved in tRNA selection in the A site and with the mRNA backbone. Located at the interface of the 30S and 50S subunits, it traverses the body of the 30S subunit contacting proteins on the other side and probably holding the rRNA structure together. The combined cluster of proteins S8, S12 and S17 appears to hold together the shoulder and platform of the 30S subunit. The protein is Small ribosomal subunit protein uS12 of Sphingopyxis alaskensis (strain DSM 13593 / LMG 18877 / RB2256) (Sphingomonas alaskensis).